We begin with the raw amino-acid sequence, 788 residues long: Protein kintoun (788 aa).

Disordered stretches follow at residues 194–249, 415–438, and 628–754; these read LRKP…SEQD, NNSEGLTSESNLDTGAPYLPEISP, and HKEH…SSSV. The segment covering 225–241 has biased composition (basic and acidic residues); the sequence is GKEKKDQKRVIKEEHKQ. The segment covering 417–427 has biased composition (polar residues); that stretch reads SEGLTSESNLD. Basic and acidic residues-rich tracts occupy residues 628–644 and 667–682; these read HKEHCTDHSEHERDVGV and ENTELDRDHTSERYEE. Composition is skewed to polar residues over residues 685 to 701 and 744 to 754; these read STSCTGESTSDQQQKDS and NFDSRPASSSV.

This sequence belongs to the PIH1 family. Kintoun subfamily.

Its subcellular location is the cytoplasm. It localises to the dynein axonemal particle. Functionally, required for cytoplasmic pre-assembly of axonemal dyneins, thereby playing a central role in motility in cilia and flagella. Involved in pre-assembly of dynein arm complexes in the cytoplasm before intraflagellar transport loads them for the ciliary compartment. This is Protein kintoun from Xenopus laevis (African clawed frog).